The chain runs to 404 residues: Probable tRNA sulfurtransferase (404 aa).

Positions 61 to 166 constitute a THUMP domain; that stretch reads EAVSERLKDV…SGYSYIMCDE (106 aa). Residues 184-185, 209-210, arginine 266, glycine 288, and glutamine 297 contribute to the ATP site; these read LL and HF.

This sequence belongs to the ThiI family.

The protein resides in the cytoplasm. It carries out the reaction [ThiI sulfur-carrier protein]-S-sulfanyl-L-cysteine + a uridine in tRNA + 2 reduced [2Fe-2S]-[ferredoxin] + ATP + H(+) = [ThiI sulfur-carrier protein]-L-cysteine + a 4-thiouridine in tRNA + 2 oxidized [2Fe-2S]-[ferredoxin] + AMP + diphosphate. It catalyses the reaction [ThiS sulfur-carrier protein]-C-terminal Gly-Gly-AMP + S-sulfanyl-L-cysteinyl-[cysteine desulfurase] + AH2 = [ThiS sulfur-carrier protein]-C-terminal-Gly-aminoethanethioate + L-cysteinyl-[cysteine desulfurase] + A + AMP + 2 H(+). It participates in cofactor biosynthesis; thiamine diphosphate biosynthesis. Catalyzes the ATP-dependent transfer of a sulfur to tRNA to produce 4-thiouridine in position 8 of tRNAs, which functions as a near-UV photosensor. Also catalyzes the transfer of sulfur to the sulfur carrier protein ThiS, forming ThiS-thiocarboxylate. This is a step in the synthesis of thiazole, in the thiamine biosynthesis pathway. The sulfur is donated as persulfide by IscS. The sequence is that of Probable tRNA sulfurtransferase from Bacillus cereus (strain ZK / E33L).